A 457-amino-acid chain; its full sequence is Probable cytosolic Fe-S cluster assembly factor oxy-4 (457 aa).

Position 25 (Cys25) interacts with [4Fe-4S] cluster. The tract at residues 38–59 (KEESQVNIRTKKPKDKESSKTE) is disordered. [4Fe-4S] cluster contacts are provided by Cys71, Cys74, Cys77, Cys176, Cys232, Cys380, and Cys384.

The protein belongs to the NARF family.

Component of the cytosolic iron-sulfur (Fe/S) protein assembly machinery. Required for maturation of extramitochondrial Fe/S proteins. In Caenorhabditis elegans, this protein is Probable cytosolic Fe-S cluster assembly factor oxy-4 (oxy-4).